The chain runs to 616 residues: Proline--tRNA ligase (616 aa).

The protein belongs to the class-II aminoacyl-tRNA synthetase family. ProS type 1 subfamily. As to quaternary structure, homodimer.

It localises to the cytoplasm. It catalyses the reaction tRNA(Pro) + L-proline + ATP = L-prolyl-tRNA(Pro) + AMP + diphosphate. Its function is as follows. Catalyzes the attachment of proline to tRNA(Pro) in a two-step reaction: proline is first activated by ATP to form Pro-AMP and then transferred to the acceptor end of tRNA(Pro). As ProRS can inadvertently accommodate and process non-cognate amino acids such as alanine and cysteine, to avoid such errors it has two additional distinct editing activities against alanine. One activity is designated as 'pretransfer' editing and involves the tRNA(Pro)-independent hydrolysis of activated Ala-AMP. The other activity is designated 'posttransfer' editing and involves deacylation of mischarged Ala-tRNA(Pro). The misacylated Cys-tRNA(Pro) is not edited by ProRS. This is Proline--tRNA ligase from Streptococcus gordonii (strain Challis / ATCC 35105 / BCRC 15272 / CH1 / DL1 / V288).